We begin with the raw amino-acid sequence, 411 residues long: Multidrug resistance protein MdtG (411 aa).

Helical transmembrane passes span leucine 17–phenylalanine 37, leucine 59–alanine 79, alanine 92–leucine 112, alanine 116–valine 136, tryptophan 147–alanine 167, proline 174–valine 194, valine 222–isoleucine 242, leucine 257–proline 277, isoleucine 291–asparagine 311, phenylalanine 320–asparagine 340, and alanine 379–leucine 399.

It belongs to the major facilitator superfamily. DHA1 family. MdtG (TC 2.A.1.2.20) subfamily.

It localises to the cell inner membrane. This chain is Multidrug resistance protein MdtG, found in Erwinia billingiae (strain Eb661).